The following is a 134-amino-acid chain: uncharacterized protein (134 aa).

Belongs to the ycf68 family.

The protein resides in the plastid. It is found in the chloroplast. This is an uncharacterized protein from Saccharum hybrid (Sugarcane).